Reading from the N-terminus, the 604-residue chain is Putative O-acetyltransferase SACOL0978 (604 aa).

Transmembrane regions (helical) follow at residues 15–35 (YIPG…IYHL), 43–63 (GFLG…SLLL), 85–105 (LLPA…LLKS), 150–170 (AIEE…LLTI), 176–196 (IGFI…FIYS), 212–232 (LQTL…KLKN), 240–260 (YVID…FFII), 267–287 (IYDG…ASVV), 310–330 (YSLY…YVDG), 332–352 (IPVY…ELSY), and 377–397 (FIRM…LVGA). Residues Ser459, Asp581, and His584 contribute to the active site.

This sequence belongs to the acyltransferase 3 family.

Its subcellular location is the cell membrane. The sequence is that of Putative O-acetyltransferase SACOL0978 from Staphylococcus aureus (strain COL).